Reading from the N-terminus, the 391-residue chain is Protein Wnt-2b (391 aa).

5 disulfides stabilise this stretch: Cys-107-Cys-118, Cys-158-Cys-166, Cys-168-Cys-188, Cys-237-Cys-251, and Cys-239-Cys-246. Asn-117 is a glycosylation site (N-linked (GlcNAc...) asparagine). A lipid anchor (O-palmitoleoyl serine; by PORCN) is attached at Ser-243. Residue Asn-283 is glycosylated (N-linked (GlcNAc...) asparagine). Intrachain disulfides connect Cys-309–Cys-340, Cys-325–Cys-335, Cys-339–Cys-379, Cys-355–Cys-370, Cys-357–Cys-367, and Cys-362–Cys-363.

This sequence belongs to the Wnt family. In terms of assembly, forms a soluble 1:1 complex with AFM; this prevents oligomerization and is required for prolonged biological activity. The complex with AFM may represent the physiological form in body fluids. Interacts with FZD4 and FZD5. In terms of processing, palmitoleoylation is required for efficient binding to frizzled receptors. Depalmitoleoylation leads to Wnt signaling pathway inhibition. As to expression, isoform 1 is expressed in adult heart, brain, placenta, lung, prostate, testis, ovary, small intestine and colon. In the adult brain, it is mainly found in the caudate nucleus, subthalamic nucleus and thalamus. Also detected in fetal brain, lung and kidney. Isoform 2 is expressed in fetal brain, fetal lung, fetal kidney, caudate nucleus, testis and cancer cell lines.

The protein resides in the secreted. Its subcellular location is the extracellular space. It localises to the extracellular matrix. Functionally, ligand for members of the frizzled family of seven transmembrane receptors. Functions in the canonical Wnt/beta-catenin signaling pathway. Plays a redundant role in embryonic lung development. This is Protein Wnt-2b (WNT2B) from Homo sapiens (Human).